A 925-amino-acid chain; its full sequence is Serine/threonine-protein kinase PLK4 (925 aa).

Positions 12-265 (FKVGNLLGKG…LSSVLDHPFM (254 aa)) constitute a Protein kinase domain. ATP-binding positions include 18–26 (LGKGSFAGV) and Lys-41. N6-acetyllysine occurs at positions 45 and 46. Residue Asp-136 is the Proton acceptor of the active site. Disordered stretches follow at residues 262-283 (HPFM…EDSM) and 328-394 (KNSS…KTYS). The segment covering 330–341 (SSDFSSGDGSNF) has biased composition (low complexity). The segment covering 342–353 (CTQWGNPEQEAN) has biased composition (polar residues). Positions 359–369 (RVIEDAEERPH) are enriched in basic and acidic residues. Over residues 381-391 (RASPSNQSRAK) the composition is skewed to polar residues. Ser-400 bears the Phosphoserine mark. The interval 517 to 538 (EVMPQEPGLHPHSEQSKNRSME) is disordered. The segment covering 525 to 536 (LHPHSEQSKNRS) has biased composition (basic and acidic residues). Positions 547–660 (TLRSITSPLI…SRFIQLVRSK (114 aa)) constitute a Cryptic POLO box 1 (CPB1) domain. Residues 661-774 (TPKITYFTRY…GRKPGNTSSP (114 aa)) enclose the Cryptic POLO box 2 (CPB2) domain. Ser-778 is subject to Phosphoserine. Residues 841–919 (QLLKSVFVKN…LSSILLMFSN (79 aa)) enclose the POLO box domain.

The protein belongs to the protein kinase superfamily. Ser/Thr protein kinase family. CDC5/Polo subfamily. As to quaternary structure, homodimer. Interacts with CEP152 (via N-terminus). Interacts with CEP78; this interaction may be important for proper PLK4 localization to the centriole and PLK4-induced overduplication of centrioles. Interacts with CEP131. Interacts simultaneously with TENT5C and CEP192. Interacts with TENT5C; this interaction leads to the TENT5C recruitment in the centrosome. Interacts with CEP85; this interaction may be important in cell migration and centriole assembly. Post-translationally, ubiquitinated; leading to its degradation by the proteasome. Deubiquitinated by USP54; leading to PLK4 stabilization. In terms of processing, tyrosine-phosphorylated by TEC. Acetylation by KAT2A and KAT2B impairs kinase activity by shifting the kinase to an inactive conformation. Expressed in tissues associated with mitotic and meiotic cell division. Highly expressed in testis.

The protein resides in the cytoplasm. The protein localises to the cytoskeleton. Its subcellular location is the microtubule organizing center. It is found in the centrosome. It localises to the centriole. The protein resides in the nucleus. The protein localises to the nucleolus. Its subcellular location is the cleavage furrow. The catalysed reaction is L-seryl-[protein] + ATP = O-phospho-L-seryl-[protein] + ADP + H(+). The enzyme catalyses L-threonyl-[protein] + ATP = O-phospho-L-threonyl-[protein] + ADP + H(+). Serine/threonine-protein kinase that plays a central role in centriole duplication. Able to trigger procentriole formation on the surface of the parental centriole cylinder, leading to the recruitment of centriole biogenesis proteins such as SASS6, CPAP, CCP110, CEP135 and gamma-tubulin. When overexpressed, it is able to induce centrosome amplification through the simultaneous generation of multiple procentrioles adjoining each parental centriole during S phase. Phosphorylates 'Ser-151' of FBXW5 during the G1/S transition, leading to inhibit FBXW5 ability to ubiquitinate SASS6. Its central role in centriole replication suggests a possible role in tumorigenesis, centrosome aberrations being frequently observed in tumors. Phosphorylates CDC25C and CHEK2. Also involved in deuterosome-mediated centriole amplification in multiciliated that can generate more than 100 centrioles. Also involved in trophoblast differentiation by phosphorylating HAND1, leading to disrupt the interaction between HAND1 and MDFIC and activate HAND1. Required for the recruitment of STIL to the centriole and for STIL-mediated centriole amplification. Phosphorylates CEP131 at 'Ser-78' and PCM1 at 'Ser-372' which is essential for proper organization and integrity of centriolar satellites. This Mus musculus (Mouse) protein is Serine/threonine-protein kinase PLK4.